Consider the following 1153-residue polypeptide: uncharacterized protein (1153 aa).

The first 18 residues, 1 to 18 (MNKNIFITLLISLLLLSG), serve as a signal peptide directing secretion. Cysteine 19 is lipidated: N-palmitoyl cysteine. Residue cysteine 19 is the site of S-diacylglycerol cysteine attachment. 4 helical membrane-spanning segments follow: residues 289–309 (VSAI…IGNI), 393–413 (LGFI…FLIF), 422–442 (ALIT…FMLF), and 457–477 (ISYA…SMII).

Belongs to the TrbL/VirB6 family.

Its subcellular location is the cell membrane. This is an uncharacterized protein from Rickettsia conorii (strain ATCC VR-613 / Malish 7).